A 1288-amino-acid polypeptide reads, in one-letter code: 5-oxoprolinase (1288 aa).

Threonine 151 carries the phosphothreonine modification. Residues 1249–1269 (GGGGYGDPEDPAPLPGSPLQP) are disordered. Serine 1265 is subject to Phosphoserine.

This sequence belongs to the oxoprolinase family. As to quaternary structure, homodimer. Expressed in coronary artery and kidney.

The protein localises to the cytoplasm. It localises to the cytosol. The catalysed reaction is 5-oxo-L-proline + ATP + 2 H2O = L-glutamate + ADP + phosphate + H(+). Catalyzes the cleavage of 5-oxo-L-proline to form L-glutamate coupled to the hydrolysis of ATP to ADP and inorganic phosphate. This Bos taurus (Bovine) protein is 5-oxoprolinase (OPLAH).